Reading from the N-terminus, the 163-residue chain is Transcriptional repressor NrdR (163 aa).

Residues 1 to 22 (MRCPKCQSLKSSVIDSRQAEDG) form a disordered region. The segment at 3–34 (CPKCQSLKSSVIDSRQAEDGNTIRRRRSCDQC) is a zinc-finger region. The ATP-cone domain occupies 49 to 139 (LVVVKKDGTR…VYRSFKDVGE (91 aa)).

This sequence belongs to the NrdR family. It depends on Zn(2+) as a cofactor.

In terms of biological role, negatively regulates transcription of bacterial ribonucleotide reductase nrd genes and operons by binding to NrdR-boxes. This Streptococcus suis (strain 98HAH33) protein is Transcriptional repressor NrdR.